We begin with the raw amino-acid sequence, 308 residues long: Aliphatic nitrilase (308 aa).

Residues 4-270 (FRAAVVQAAP…ETILTADLDT (267 aa)) form the CN hydrolase domain. The active-site Proton acceptor is E44. Residue K130 is part of the active site. Residue C164 is the Nucleophile of the active site.

The protein belongs to the carbon-nitrogen hydrolase superfamily. Nitrilase family.

The catalysed reaction is a nitrile + 2 H2O = a carboxylate + NH4(+). Its function is as follows. Nitrilase that hydrolyzes preferentially phenylacetonitrile, but not (R,S)-mandelonitrile. Also acts on dinitriles like phenylenediacetonitriles (PDAs) 1,2-PDA, 1,3-PDA, and 1,4-PDA, and cyanophenyl acetonitriles (CPAs) 2-CPA and 4-CPA, but with lower activities. The protein is Aliphatic nitrilase (nit) of Sinorhizobium fredii (strain HH103).